Here is a 379-residue protein sequence, read N- to C-terminus: Anhydro-N-acetylmuramic acid kinase (379 aa).

9–16 (GTSVDGID) serves as a coordination point for ATP.

It belongs to the anhydro-N-acetylmuramic acid kinase family.

It catalyses the reaction 1,6-anhydro-N-acetyl-beta-muramate + ATP + H2O = N-acetyl-D-muramate 6-phosphate + ADP + H(+). It participates in amino-sugar metabolism; 1,6-anhydro-N-acetylmuramate degradation. The protein operates within cell wall biogenesis; peptidoglycan recycling. Its function is as follows. Catalyzes the specific phosphorylation of 1,6-anhydro-N-acetylmuramic acid (anhMurNAc) with the simultaneous cleavage of the 1,6-anhydro ring, generating MurNAc-6-P. Is required for the utilization of anhMurNAc either imported from the medium or derived from its own cell wall murein, and thus plays a role in cell wall recycling. The polypeptide is Anhydro-N-acetylmuramic acid kinase (Acaryochloris marina (strain MBIC 11017)).